We begin with the raw amino-acid sequence, 298 residues long: Pheromone-regulated membrane protein 9 (298 aa).

The Cytoplasmic segment spans residues 1-111; sequence MSPQYHFYFV…YWIYEVTRHK (111 aa). A helical transmembrane segment spans residues 112–132; sequence AAVILLVLIVTSILLLVFFYN. Topologically, residues 133 to 137 are extracellular; it reads TEFCV. Residues 138–158 form a helical membrane-spanning segment; that stretch reads AFEILLFSFCFPGTCMVVIAF. Topologically, residues 159–298 are cytoplasmic; that stretch reads SEPIGDREFK…QEYPGVDEFF (140 aa). Residues 235-262 are disordered; it reads SSASNVKDAQSNDETAGTPNEAAESSSF. The interval 297–298 is COPII binding; the sequence is FF.

Belongs to the DUP/COS family. As to quaternary structure, interacts with PRM8. Binds to COPII coated vesicles.

The protein resides in the cell membrane. In terms of biological role, may be involved in endoplasmic reticulum exit trafficking of proteins. The protein is Pheromone-regulated membrane protein 9 (PRM9) of Saccharomyces cerevisiae (strain ATCC 204508 / S288c) (Baker's yeast).